Consider the following 362-residue polypeptide: Putative gustatory receptor 89a (362 aa).

At 1-38 (MLRFPHVCGLCLLLKYWQILALAPFRTSEPMVARCQRW) the chain is on the cytoplasmic side. Residues 39–59 (MTLIAVFRWLLLTSMAPFVLW) traverse the membrane as a helical segment. Residues 60–74 (KSAAMYEATNVRHSM) lie on the Extracellular side of the membrane. A helical transmembrane segment spans residues 75 to 95 (VFKTIALATMTGDVCISLALL). Over 96–126 (GNHLWNRRELANLVNDLARLHRRRRLSWWST) the chain is Cytoplasmic. Residues 127–147 (LFLWLKLLLSLYDLLCSVPFL) traverse the membrane as a helical segment. Residues 148-166 (KGAGGRLPWSQLVAYGVQL) are Extracellular-facing. The chain crosses the membrane as a helical span at residues 167-187 (YFQHVASVYGNGIFGGILLML). At 188-223 (ECYNQLEREEPTNLARLLQKEYSWLRLIQRFVKLFQ) the chain is on the cytoplasmic side. The helical transmembrane segment at 224 to 244 (LGIFLLVLGSFVNIMVNIYAF) threads the bilayer. Topologically, residues 245–255 (MSYYVSLHGVP) are extracellular. The helical transmembrane segment at 256 to 276 (LTISNNCLVLAIQLYAVILAA) threads the bilayer. Over 277–333 (HLCQVRSAKLRKKCLQLEYVPEGLTQEQAMASTPFPVLTPTGNVKFRILGVFILDNS) the chain is Cytoplasmic. A helical membrane pass occupies residues 334 to 354 (FWLFLVSYAMNFIVVILQTSF). The Extracellular portion of the chain corresponds to 355-362 (EHINHGEI).

Belongs to the insect chemoreceptor superfamily. Gustatory receptor (GR) family. Gr77a subfamily.

The protein localises to the cell membrane. Functionally, probable gustatory receptor which mediates acceptance or avoidance behavior, depending on its substrates. This is Putative gustatory receptor 89a (Gr89a) from Drosophila melanogaster (Fruit fly).